Consider the following 124-residue polypeptide: Large ribosomal subunit protein bL12 (124 aa).

This sequence belongs to the bacterial ribosomal protein bL12 family. Homodimer. Part of the ribosomal stalk of the 50S ribosomal subunit. Forms a multimeric L10(L12)X complex, where L10 forms an elongated spine to which 2 to 4 L12 dimers bind in a sequential fashion. Binds GTP-bound translation factors.

Forms part of the ribosomal stalk which helps the ribosome interact with GTP-bound translation factors. Is thus essential for accurate translation. The polypeptide is Large ribosomal subunit protein bL12 (Burkholderia mallei (strain NCTC 10247)).